We begin with the raw amino-acid sequence, 342 residues long: Isopentenyl-diphosphate delta-isomerase (342 aa).

11-12 (RK) contacts substrate. FMN-binding positions include Ser-68, 69 to 71 (SMT), Ser-99, and Asn-127. 99 to 101 (SMR) is a binding site for substrate. Gln-162 is a substrate binding site. Mg(2+) is bound at residue Glu-163. Residues Lys-194, Thr-224, 274 to 276 (GLK), and 295 to 296 (AG) each bind FMN.

Belongs to the IPP isomerase type 2 family. Homooctamer. Dimer of tetramers. FMN serves as cofactor. Requires NADPH as cofactor. It depends on Mg(2+) as a cofactor.

The protein localises to the cytoplasm. The enzyme catalyses isopentenyl diphosphate = dimethylallyl diphosphate. Its function is as follows. Involved in the biosynthesis of isoprenoids. Catalyzes the 1,3-allylic rearrangement of the homoallylic substrate isopentenyl (IPP) to its allylic isomer, dimethylallyl diphosphate (DMAPP). The sequence is that of Isopentenyl-diphosphate delta-isomerase from Rickettsia akari (strain Hartford).